The following is a 228-amino-acid chain: 7-cyano-7-deazaguanine synthase (228 aa).

9 to 19 (LSGGPDSTTVL) lines the ATP pocket. Zn(2+) contacts are provided by C193, C203, C206, and C209.

The protein belongs to the QueC family. Zn(2+) serves as cofactor.

It carries out the reaction 7-carboxy-7-deazaguanine + NH4(+) + ATP = 7-cyano-7-deazaguanine + ADP + phosphate + H2O + H(+). Its pathway is purine metabolism; 7-cyano-7-deazaguanine biosynthesis. In terms of biological role, catalyzes the ATP-dependent conversion of 7-carboxy-7-deazaguanine (CDG) to 7-cyano-7-deazaguanine (preQ(0)). The polypeptide is 7-cyano-7-deazaguanine synthase (Rickettsia massiliae (strain Mtu5)).